A 319-amino-acid polypeptide reads, in one-letter code: Ribosomal RNA small subunit methyltransferase H (319 aa).

S-adenosyl-L-methionine contacts are provided by residues 37 to 39, Asp56, Leu90, Asp104, and Gln111; that span reads GGH.

This sequence belongs to the methyltransferase superfamily. RsmH family.

It is found in the cytoplasm. The catalysed reaction is cytidine(1402) in 16S rRNA + S-adenosyl-L-methionine = N(4)-methylcytidine(1402) in 16S rRNA + S-adenosyl-L-homocysteine + H(+). Specifically methylates the N4 position of cytidine in position 1402 (C1402) of 16S rRNA. The chain is Ribosomal RNA small subunit methyltransferase H from Nocardioides sp. (strain ATCC BAA-499 / JS614).